Here is a 317-residue protein sequence, read N- to C-terminus: Vacuolar arginine/histidine antiporter YPQ2 (317 aa).

At 1-13 (MSCSNGIWPTVSN) the chain is on the vacuolar side. Positions 8 to 71 (WPTVSNLCGS…AKLTGQLLFQ (64 aa)) constitute a PQ-loop 1 domain. A helical membrane pass occupies residues 14–34 (LCGSLSFFTSVISLFPQIIET). Over 35–39 (YRDKS) the chain is Cytoplasmic. The chain crosses the membrane as a helical span at residues 40–62 (VDGLSPYFLLAWLCGDITSLIGA). Topologically, residues 63–71 (KLTGQLLFQ) are vacuolar. Residues 72–94 (ILLAIYFLLNDSFVCGQYYYYGV) form a helical membrane-spanning segment. At 95 to 143 (LHENKLATVGHEPKPLLPELVENGELLREEEDMIQGGSSAESPRSSRRR) the chain is on the cytoplasmic side. The residue at position 136 (Ser-136) is a Phosphoserine. The chain crosses the membrane as a helical span at residues 144–164 (SAITAALAIAHTISTASAYPL). Residues 165–184 (NVGSTQSQVGPPGDGKNSQL) are Vacuolar-facing. Residues 185 to 205 (GTILSWIGASFYVGARIPQLI) traverse the membrane as a helical segment. The PQ-loop 2 domain occupies 185 to 247 (GTILSWIGAS…SCRFLDNQNK (63 aa)). At 206-215 (KNYNRKSTDG) the chain is on the cytoplasmic side. Residues 216 to 236 (LSPFLFATTLLCNITYNLSIF) form a helical membrane-spanning segment. Residues 237 to 249 (TSCRFLDNQNKRE) lie on the Vacuolar side of the membrane. Residues 250–270 (FIVNELPFIFGSAGTIAFDLI) form a helical membrane-spanning segment. Residues 271–317 (YFYQYYILYATDMQLRELERELYSPEEDSAAQLVTERTSLLSGETQT) are Cytoplasmic-facing.

This sequence belongs to the laat-1 family.

The protein localises to the vacuole membrane. It carries out the reaction L-histidine(out) + L-arginine(in) = L-histidine(in) + L-arginine(out). Its function is as follows. Amino acid transporter that moves arginine across the vacuolar membrane. Active during nitrogen starvation when it exports stored vacuolar arginine to the cytosol, for use as a nitrogen source. Has been shown to function as an arginine/histidine antiporter when substrate is present on both sides of the membrane, but may also function as a uniporter. The polypeptide is Vacuolar arginine/histidine antiporter YPQ2 (YPQ2) (Saccharomyces cerevisiae (strain ATCC 204508 / S288c) (Baker's yeast)).